Here is a 283-residue protein sequence, read N- to C-terminus: (+)-borneol dehydrogenase 2 (283 aa).

Residues 27 to 33, D51, 76 to 77, and 103 to 105 each bind NAD(+); these read GGSSGIG, DV, and NAG. S157 serves as the catalytic Proton donor. Residues Y170, K174, and T205 each contribute to the NAD(+) site. Y170 serves as the catalytic Proton acceptor. K174 serves as the catalytic Proton donor/acceptor.

The protein belongs to the short-chain dehydrogenases/reductases (SDR) family.

It carries out the reaction (1R,2S,4R)-borneol + NAD(+) = (1R,4R)-camphor + NADH + H(+). Involved in the biosynthesis of monoterpene natural products related to camphor. Catalayzes the oxidation of (+)-borneol to (+)-camphor. Shows absolute selectivity towards (+)-borneol. Catalyzes the oxidation of (+)-isoborneol to (-)-camphor. Shows absolute selectivity towards (+)-isoborneol. The protein is (+)-borneol dehydrogenase 2 of Salvia officinalis (Sage).